We begin with the raw amino-acid sequence, 353 residues long: MAAPVVAADSPVIENMPETAGGATENSAEAQKRPQFGTRFLTDPRQVFQHNAWDNVEWSAEQEEAALKKVQENSQPLPAEKQEEFDNRANEYWNDFYTIHENRFFKDRHWLFTEFPELAPQQKHLRGAEEKESLEHMLNGEDISLNPTHDEFPGASASYRILEVGCGVGNTVFPILKTNNDPGLFVYCCDFSSTAVDLVKSNPEYDPSRCHAFVHDMSDESGEYPMPDHSLDVIVLIFVLSALHPEKMQKSINRLGRLLKPGGVLLLRDYGRYDMAQLRFKKGRCLSENFYVRGDGTRVYFFTQDELHDLFSSAGLEKLQNLVDRRLQVNRGKQLTMYRVWVQCKYRKVLAPT.

The tract at residues 1–37 (MAAPVVAADSPVIENMPETAGGATENSAEAQKRPQFG) is disordered. Positions 93, 97, 165, 190, 216, and 237 each coordinate S-adenosyl-L-methionine.

It belongs to the methyltransferase superfamily. METL family. Monomer.

The protein localises to the cytoplasm. The enzyme catalyses cytidine(32) in tRNA(Thr) + S-adenosyl-L-methionine = N(3)-methylcytidine(32) in tRNA(Thr) + S-adenosyl-L-homocysteine + H(+). It carries out the reaction cytidine(32) in tRNA(Arg)(CCU) + S-adenosyl-L-methionine = N(3)-methylcytidine(32) in tRNA(Arg)(CCU) + S-adenosyl-L-homocysteine + H(+). Its function is as follows. S-adenosyl-L-methionine-dependent methyltransferase that mediates N(3)-methylcytidine modification of residue 32 of the tRNA anticodon loop of tRNA(Thr)(UGU) and tRNA(Arg)(CCU). N(3)-methylcytidine methylation by mettl2a requires the N6-threonylcarbamoylation of tRNA (t6A37) by the EKC/KEOPS complex as prerequisite. The sequence is that of tRNA N(3)-cytidine methyltransferase METTL2 (mettl2a) from Danio rerio (Zebrafish).